A 473-amino-acid chain; its full sequence is Chromosomal replication initiator protein DnaA (473 aa).

Residues 1-87 (MADGEESISV…LAVTTFAIVV (87 aa)) form a domain I, interacts with DnaA modulators region. The interval 87 to 132 (VNPEIQQESLSTVGEPEPTPAPYLDVATFTVAPPAEITAPPRNGDT) is domain II. Residues 133–349 (RLNSKYSFDN…GTLIRVTAFA (217 aa)) form a domain III, AAA+ region region. G177, G179, K180, and T181 together coordinate ATP. The interval 350-473 (SLNRTPVDMP…LTSRIKQNHR (124 aa)) is domain IV, binds dsDNA.

This sequence belongs to the DnaA family. Oligomerizes as a right-handed, spiral filament on DNA at oriC.

The protein resides in the cytoplasm. In terms of biological role, plays an essential role in the initiation and regulation of chromosomal replication. ATP-DnaA binds to the origin of replication (oriC) to initiate formation of the DNA replication initiation complex once per cell cycle. Binds the DnaA box (a 9 base pair repeat at the origin) and separates the double-stranded (ds)DNA. Forms a right-handed helical filament on oriC DNA; dsDNA binds to the exterior of the filament while single-stranded (ss)DNA is stabiized in the filament's interior. The ATP-DnaA-oriC complex binds and stabilizes one strand of the AT-rich DNA unwinding element (DUE), permitting loading of DNA polymerase. After initiation quickly degrades to an ADP-DnaA complex that is not apt for DNA replication. Binds acidic phospholipids. This is Chromosomal replication initiator protein DnaA from Leifsonia xyli subsp. xyli (strain CTCB07).